Here is an 869-residue protein sequence, read N- to C-terminus: Translation initiation factor IF-2 (869 aa).

Disordered stretches follow at residues 51 to 78 (KQHGGTGSEAPKRMTLQRKTTSTLNMGK) and 105 to 277 (EEET…SDLK). The span at 67–76 (QRKTTSTLNM) shows a compositional bias: polar residues. Residues 110 to 119 (RALAEQQAQL) are compositionally biased toward low complexity. The segment covering 120–241 (EAEKAAAEEA…KKQEAEEVHV (122 aa)) has biased composition (basic and acidic residues). In terms of domain architecture, tr-type G spans 369–542 (SRAPVVTIMG…ELLDLKAPPT (174 aa)). The G1 stretch occupies residues 378-385 (GHVDHGKT). Position 378-385 (378-385 (GHVDHGKT)) interacts with GTP. Positions 403–407 (GITQH) are G2. The tract at residues 424–427 (DTPG) is G3. GTP is bound by residues 424–428 (DTPGH) and 478–481 (NKMD). The interval 478-481 (NKMD) is G4. The tract at residues 514–516 (SAK) is G5.

The protein belongs to the TRAFAC class translation factor GTPase superfamily. Classic translation factor GTPase family. IF-2 subfamily.

The protein localises to the cytoplasm. Its function is as follows. One of the essential components for the initiation of protein synthesis. Protects formylmethionyl-tRNA from spontaneous hydrolysis and promotes its binding to the 30S ribosomal subunits. Also involved in the hydrolysis of GTP during the formation of the 70S ribosomal complex. This chain is Translation initiation factor IF-2, found in Pseudoalteromonas atlantica (strain T6c / ATCC BAA-1087).